The sequence spans 122 residues: Large ribosomal subunit protein uL14c (122 aa).

The protein belongs to the universal ribosomal protein uL14 family. Part of the 50S ribosomal subunit.

The protein localises to the plastid. It localises to the chloroplast. In terms of biological role, binds to 23S rRNA. In Lemna minor (Common duckweed), this protein is Large ribosomal subunit protein uL14c.